We begin with the raw amino-acid sequence, 208 residues long: N-(5'-phosphoribosyl)anthranilate isomerase (208 aa).

It belongs to the TrpF family.

It carries out the reaction N-(5-phospho-beta-D-ribosyl)anthranilate = 1-(2-carboxyphenylamino)-1-deoxy-D-ribulose 5-phosphate. It participates in amino-acid biosynthesis; L-tryptophan biosynthesis; L-tryptophan from chorismate: step 3/5. This Deinococcus radiodurans (strain ATCC 13939 / DSM 20539 / JCM 16871 / CCUG 27074 / LMG 4051 / NBRC 15346 / NCIMB 9279 / VKM B-1422 / R1) protein is N-(5'-phosphoribosyl)anthranilate isomerase.